We begin with the raw amino-acid sequence, 130 residues long: S-adenosylmethionine decarboxylase proenzyme (130 aa).

Catalysis depends on serine 66, which acts as the Schiff-base intermediate with substrate; via pyruvic acid. Residue serine 66 is modified to Pyruvic acid (Ser); by autocatalysis. Histidine 71 acts as the Proton acceptor; for processing activity in catalysis. Residue cysteine 86 is the Proton donor; for catalytic activity of the active site.

It belongs to the prokaryotic AdoMetDC family. Type 1 subfamily. In terms of assembly, heterotetramer of two alpha and two beta chains arranged as a dimer of alpha/beta heterodimers. Pyruvate serves as cofactor. Post-translationally, is synthesized initially as an inactive proenzyme. Formation of the active enzyme involves a self-maturation process in which the active site pyruvoyl group is generated from an internal serine residue via an autocatalytic post-translational modification. Two non-identical subunits are generated from the proenzyme in this reaction, and the pyruvate is formed at the N-terminus of the alpha chain, which is derived from the carboxyl end of the proenzyme. The post-translation cleavage follows an unusual pathway, termed non-hydrolytic serinolysis, in which the side chain hydroxyl group of the serine supplies its oxygen atom to form the C-terminus of the beta chain, while the remainder of the serine residue undergoes an oxidative deamination to produce ammonia and the pyruvoyl group blocking the N-terminus of the alpha chain.

It carries out the reaction S-adenosyl-L-methionine + H(+) = S-adenosyl 3-(methylsulfanyl)propylamine + CO2. The protein operates within amine and polyamine biosynthesis; S-adenosylmethioninamine biosynthesis; S-adenosylmethioninamine from S-adenosyl-L-methionine: step 1/1. Its function is as follows. Catalyzes the decarboxylation of S-adenosylmethionine to S-adenosylmethioninamine (dcAdoMet), the propylamine donor required for the synthesis of the polyamines spermine and spermidine from the diamine putrescine. The polypeptide is S-adenosylmethionine decarboxylase proenzyme (Bacillus cereus (strain ATCC 10987 / NRS 248)).